Here is a 182-residue protein sequence, read N- to C-terminus: Adenine phosphoribosyltransferase (182 aa).

The protein belongs to the purine/pyrimidine phosphoribosyltransferase family. In terms of assembly, homodimer.

It is found in the cytoplasm. It catalyses the reaction AMP + diphosphate = 5-phospho-alpha-D-ribose 1-diphosphate + adenine. The protein operates within purine metabolism; AMP biosynthesis via salvage pathway; AMP from adenine: step 1/1. Its function is as follows. Catalyzes a salvage reaction resulting in the formation of AMP, that is energically less costly than de novo synthesis. This Pseudomonas aeruginosa (strain LESB58) protein is Adenine phosphoribosyltransferase.